The primary structure comprises 313 residues: Lactamase-like protein ptaB (313 aa).

Residues His-104, His-106, Asp-108, and His-109 each coordinate Zn(2+). Catalysis depends on Asp-108, which acts as the Proton donor/acceptor.

Belongs to the metallo-beta-lactamase superfamily. It depends on Zn(2+) as a cofactor.

The enzyme catalyses atrochrysone carboxyl-[ACP] + H2O = atrochrysone carboxylate + holo-[ACP] + H(+). Its pathway is secondary metabolite biosynthesis. Lactamase-like protein; part of the gene cluster that mediates the biosynthesis of pestheic acid, a diphenyl ether which is a biosynthetic precursor of the unique chloropupukeananes. The biosynthesis initiates from condensation of acetate and malonate units catalyzed by the non-reducing PKS ptaA. As the ptaA protein is TE/CLC domain-deficient, hydrolysis and Claisen cyclization of the polyketide could be catalyzed by ptaB containing a beta-lactamase domain. The ptaB protein might hydrolyze the thioester bond between the ACP of ptaA and the intermediate to release atrochrysone carboxylic acid, which is spontaneously dehydrated to form endocrocin anthrone. Endocrocin anthrone is then converted to endocrocin, catalyzed by the anthrone oxygenase ptaC. Spontaneous decarboxylation of endocrocin occurs to generate emodin. An O-methyltransferase (ptaH or ptaI) could methylate emodin to form physcion. PtaJ could then catalyze the oxidative cleavage of physcion, and rotation of the intermediate could then afford desmethylisosulochrin. PtaF, a putative NADH-dependent oxidoreductase, might also participate in the oxidative cleavage step. Desmethylisosulochrin is then transformed by another O-methyltransferase (ptaH or ptaI) to form isosulochrin. Chlorination of isosulochrin by ptaM in the cyclohexadienone B ring then produces chloroisosulochrin. PtaE is responsible for the oxidative coupling reactions of both benzophenones isosulochrin and chloroisosulochrin to RES-1214-1 and pestheic acid respectively, regardless of chlorination. In Pestalotiopsis fici (strain W106-1 / CGMCC3.15140), this protein is Lactamase-like protein ptaB.